A 248-amino-acid polypeptide reads, in one-letter code: MLDGLVTAMRTLTVLSVPGKDADEFSRSLYWFPLVGLLLGLLQAALAWIGMVSQIPEFSALLVLLSGVLLTRAIHADGLADLADGFFGGKTRESRLRIMKDPAVGSFGVIALILLFLFKWIALTRIVAHGQYEWIVSGIVLARFVQVVLASVMTYAREGEGTACRFVAGAGGWHVVVAALFSLLILVLVMKMQRLPIVVALLATAVSGSLTGMLAAKKIHGVTGDVLGASSEMTEALVWCSALLLLFY.

Transmembrane regions (helical) follow at residues 32–52 (FPLVGLLLGLLQAALAWIGMV), 60–80 (ALLVLLSGVLLTRAIHADGLA), 103–123 (AVGSFGVIALILLFLFKWIAL), 134–154 (WIVSGIVLARFVQVVLASVMT), 170–190 (AGGWHVVVAALFSLLILVLVM), 195–215 (LPIVVALLATAVSGSLTGMLA), and 227–247 (LGASSEMTEALVWCSALLLLF).

The protein belongs to the CobS family. Mg(2+) is required as a cofactor.

The protein localises to the cell inner membrane. The enzyme catalyses alpha-ribazole + adenosylcob(III)inamide-GDP = adenosylcob(III)alamin + GMP + H(+). The catalysed reaction is alpha-ribazole 5'-phosphate + adenosylcob(III)inamide-GDP = adenosylcob(III)alamin 5'-phosphate + GMP + H(+). It functions in the pathway cofactor biosynthesis; adenosylcobalamin biosynthesis; adenosylcobalamin from cob(II)yrinate a,c-diamide: step 7/7. Functionally, joins adenosylcobinamide-GDP and alpha-ribazole to generate adenosylcobalamin (Ado-cobalamin). Also synthesizes adenosylcobalamin 5'-phosphate from adenosylcobinamide-GDP and alpha-ribazole 5'-phosphate. This Prosthecochloris aestuarii (strain DSM 271 / SK 413) protein is Adenosylcobinamide-GDP ribazoletransferase.